We begin with the raw amino-acid sequence, 184 residues long: ATP synthase subunit b, chloroplastic (184 aa).

A helical membrane pass occupies residues 27-49; the sequence is LATNLINLSVVLGVLIFFGKGVL.

It belongs to the ATPase B chain family. F-type ATPases have 2 components, F(1) - the catalytic core - and F(0) - the membrane proton channel. F(1) has five subunits: alpha(3), beta(3), gamma(1), delta(1), epsilon(1). F(0) has four main subunits: a(1), b(1), b'(1) and c(10-14). The alpha and beta chains form an alternating ring which encloses part of the gamma chain. F(1) is attached to F(0) by a central stalk formed by the gamma and epsilon chains, while a peripheral stalk is formed by the delta, b and b' chains.

The protein resides in the plastid. Its subcellular location is the chloroplast thylakoid membrane. Its function is as follows. F(1)F(0) ATP synthase produces ATP from ADP in the presence of a proton or sodium gradient. F-type ATPases consist of two structural domains, F(1) containing the extramembraneous catalytic core and F(0) containing the membrane proton channel, linked together by a central stalk and a peripheral stalk. During catalysis, ATP synthesis in the catalytic domain of F(1) is coupled via a rotary mechanism of the central stalk subunits to proton translocation. Component of the F(0) channel, it forms part of the peripheral stalk, linking F(1) to F(0). The sequence is that of ATP synthase subunit b, chloroplastic from Lactuca sativa (Garden lettuce).